The primary structure comprises 442 residues: tRNA modification GTPase MnmE (442 aa).

Residues Arg-23, Glu-82, and Lys-121 each contribute to the (6S)-5-formyl-5,6,7,8-tetrahydrofolate site. The TrmE-type G domain occupies Gly-215–Gln-364. Asn-225 is a K(+) binding site. GTP is bound by residues Asn-225–Ser-230, Thr-244–Thr-250, Asp-269–Gly-272, and Asn-325–Asp-328. Mg(2+) is bound at residue Ser-229. Residues Thr-244, Ile-246, and Thr-249 each contribute to the K(+) site. Thr-250 is a Mg(2+) binding site. Lys-442 contacts (6S)-5-formyl-5,6,7,8-tetrahydrofolate.

The protein belongs to the TRAFAC class TrmE-Era-EngA-EngB-Septin-like GTPase superfamily. TrmE GTPase family. Homodimer. Heterotetramer of two MnmE and two MnmG subunits. K(+) is required as a cofactor.

It localises to the cytoplasm. In terms of biological role, exhibits a very high intrinsic GTPase hydrolysis rate. Involved in the addition of a carboxymethylaminomethyl (cmnm) group at the wobble position (U34) of certain tRNAs, forming tRNA-cmnm(5)s(2)U34. The sequence is that of tRNA modification GTPase MnmE from Chlamydia pneumoniae (Chlamydophila pneumoniae).